We begin with the raw amino-acid sequence, 705 residues long: Elongation factor G (705 aa).

The 287-residue stretch at 8–294 folds into the tr-type G domain; that stretch reads ELYRNFGIMA…SVIDYLPSPL (287 aa). GTP is bound by residues 17-24, 92-96, and 146-149; these read AHIDAGKT, DTPGH, and NKMD.

This sequence belongs to the TRAFAC class translation factor GTPase superfamily. Classic translation factor GTPase family. EF-G/EF-2 subfamily.

The protein localises to the cytoplasm. Its function is as follows. Catalyzes the GTP-dependent ribosomal translocation step during translation elongation. During this step, the ribosome changes from the pre-translocational (PRE) to the post-translocational (POST) state as the newly formed A-site-bound peptidyl-tRNA and P-site-bound deacylated tRNA move to the P and E sites, respectively. Catalyzes the coordinated movement of the two tRNA molecules, the mRNA and conformational changes in the ribosome. This Cereibacter sphaeroides (strain KD131 / KCTC 12085) (Rhodobacter sphaeroides) protein is Elongation factor G.